Here is a 407-residue protein sequence, read N- to C-terminus: Phosphopentomutase (407 aa).

Mn(2+) is bound by residues Asp10, Asp306, His311, Asp347, His348, and His359.

It belongs to the phosphopentomutase family. The cofactor is Mn(2+).

The protein localises to the cytoplasm. It carries out the reaction 2-deoxy-alpha-D-ribose 1-phosphate = 2-deoxy-D-ribose 5-phosphate. It catalyses the reaction alpha-D-ribose 1-phosphate = D-ribose 5-phosphate. It functions in the pathway carbohydrate degradation; 2-deoxy-D-ribose 1-phosphate degradation; D-glyceraldehyde 3-phosphate and acetaldehyde from 2-deoxy-alpha-D-ribose 1-phosphate: step 1/2. Isomerase that catalyzes the conversion of deoxy-ribose 1-phosphate (dRib-1-P) and ribose 1-phosphate (Rib-1-P) to deoxy-ribose 5-phosphate (dRib-5-P) and ribose 5-phosphate (Rib-5-P), respectively. The sequence is that of Phosphopentomutase from Buchnera aphidicola subsp. Acyrthosiphon pisum (strain 5A).